A 310-amino-acid chain; its full sequence is Protein N-terminal asparagine amidohydrolase (310 aa).

In terms of assembly, monomer.

Its subcellular location is the cytoplasm. It carries out the reaction N-terminal L-asparaginyl-[protein] + H2O + H(+) = N-terminal L-aspartyl-[protein] + NH4(+). N-terminal asparagine deamidase that mediates deamidation of N-terminal asparagine residues to aspartate. Required for the ubiquitin-dependent turnover of intracellular proteins that initiate with Met-Asn. These proteins are acetylated on the retained initiator methionine and can subsequently be modified by the removal of N-acetyl methionine by acylaminoacid hydrolase (AAH). Conversion of the resulting N-terminal asparagine to aspartate by NTAN1/PNAD renders the protein susceptible to arginylation, polyubiquitination and degradation as specified by the N-end rule. This enzyme does not act on substrates with internal or C-terminal asparagines and does not act on glutamine residues in any position. The sequence is that of Protein N-terminal asparagine amidohydrolase from Mus musculus (Mouse).